We begin with the raw amino-acid sequence, 360 residues long: Protein Wnt-2 (360 aa).

The signal sequence occupies residues 1 to 25; that stretch reads MNAPLCGIWLWLPLLLTWLTPEVSS. 11 disulfide bridges follow: cysteine 76-cysteine 87, cysteine 127-cysteine 135, cysteine 137-cysteine 157, cysteine 206-cysteine 220, cysteine 208-cysteine 215, cysteine 278-cysteine 309, cysteine 294-cysteine 304, cysteine 308-cysteine 348, cysteine 324-cysteine 339, cysteine 326-cysteine 336, and cysteine 331-cysteine 332. Serine 212 is lipidated: O-palmitoleoyl serine; by PORCN. N-linked (GlcNAc...) asparagine glycosylation is present at asparagine 295.

It belongs to the Wnt family. Palmitoleoylation is required for efficient binding to frizzled receptors. Depalmitoleoylation leads to Wnt signaling pathway inhibition.

The protein localises to the secreted. Its subcellular location is the extracellular space. It is found in the extracellular matrix. Functionally, ligand for members of the frizzled family of seven transmembrane receptors. Functions in the canonical Wnt signaling pathway that results in activation of transcription factors of the TCF/LEF family. Functions as a upstream regulator of FGF10 expression. Plays an important role in embryonic lung development. May contribute to embryonic brain development by regulating the proliferation of dopaminergic precursors and neurons. The sequence is that of Protein Wnt-2 (WNT2) from Otolemur garnettii (Small-eared galago).